Reading from the N-terminus, the 76-residue chain is ATP synthase subunit 9, mitochondrial (76 aa).

2 helical membrane-spanning segments follow: residues 14–34 (ISTI…AALI) and 52–72 (ILGF…SFLL).

This sequence belongs to the ATPase C chain family. F-type ATPases have 2 components, CF(1) - the catalytic core - and CF(0) - the membrane proton channel. CF(1) has five subunits: alpha(3), beta(3), gamma(1), delta(1), epsilon(1). CF(0) has three main subunits: a, b and c.

The protein resides in the mitochondrion membrane. Its function is as follows. Mitochondrial membrane ATP synthase (F(1)F(0) ATP synthase or Complex V) produces ATP from ADP in the presence of a proton gradient across the membrane which is generated by electron transport complexes of the respiratory chain. F-type ATPases consist of two structural domains, F(1) - containing the extramembraneous catalytic core and F(0) - containing the membrane proton channel, linked together by a central stalk and a peripheral stalk. During catalysis, ATP synthesis in the catalytic domain of F(1) is coupled via a rotary mechanism of the central stalk subunits to proton translocation. Part of the complex F(0) domain. A homomeric c-ring of probably 10 subunits is part of the complex rotary element. The protein is ATP synthase subunit 9, mitochondrial (ATP9) of Vanderwaltozyma polyspora (strain ATCC 22028 / DSM 70294 / BCRC 21397 / CBS 2163 / NBRC 10782 / NRRL Y-8283 / UCD 57-17) (Kluyveromyces polysporus).